The sequence spans 221 residues: 21 kDa seed protein (221 aa).

A signal peptide spans 1-26 (MKTATAVVLLLFAFTSKSYFFGVANA). Cys69 and Cys116 are oxidised to a cystine.

The protein belongs to the protease inhibitor I3 (leguminous Kunitz-type inhibitor) family.

The protein is 21 kDa seed protein (ASP) of Theobroma cacao (Cacao).